The primary structure comprises 414 residues: Trafficking protein particle complex subunit 13 (414 aa).

This sequence belongs to the TRAPPC13 family. As to quaternary structure, part of the multisubunit TRAPP (transport protein particle) complex.

The sequence is that of Trafficking protein particle complex subunit 13 (trappc13) from Xenopus laevis (African clawed frog).